A 429-amino-acid polypeptide reads, in one-letter code: Histidine--tRNA ligase (429 aa).

The protein belongs to the class-II aminoacyl-tRNA synthetase family. Homodimer.

Its subcellular location is the cytoplasm. The catalysed reaction is tRNA(His) + L-histidine + ATP = L-histidyl-tRNA(His) + AMP + diphosphate + H(+). In Pseudomonas savastanoi pv. phaseolicola (strain 1448A / Race 6) (Pseudomonas syringae pv. phaseolicola (strain 1448A / Race 6)), this protein is Histidine--tRNA ligase.